The chain runs to 227 residues: Small ribosomal subunit protein uS5 (227 aa).

The tract at residues 1–22 (MSKRSNRSNNKNNTNKFNIENW) is disordered. Positions 7–18 (RSNNKNNTNKFN) are enriched in low complexity. In terms of domain architecture, S5 DRBM spans 63–126 (LEEEVMDVNL…DAAKYNLIKV (64 aa)).

Belongs to the universal ribosomal protein uS5 family. In terms of assembly, part of the 30S ribosomal subunit. Contacts protein S4.

Functionally, with S4 and S12 plays an important role in translational accuracy. In Methanosphaera stadtmanae (strain ATCC 43021 / DSM 3091 / JCM 11832 / MCB-3), this protein is Small ribosomal subunit protein uS5.